Here is a 329-residue protein sequence, read N- to C-terminus: GTP 3',8-cyclase (329 aa).

The region spanning 1–229 is the Radical SAM core domain; that stretch reads MNPVDYLRIS…TAFVQGNGPA (229 aa). Arginine 8 serves as a coordination point for GTP. Cysteine 15 and cysteine 19 together coordinate [4Fe-4S] cluster. Tyrosine 21 is a binding site for S-adenosyl-L-methionine. Cysteine 22 contributes to the [4Fe-4S] cluster binding site. Arginine 60 contributes to the GTP binding site. Glycine 64 contributes to the S-adenosyl-L-methionine binding site. Threonine 91 provides a ligand contact to GTP. Serine 115 serves as a coordination point for S-adenosyl-L-methionine. Lysine 155 contributes to the GTP binding site. Methionine 189 lines the S-adenosyl-L-methionine pocket. Cysteine 252 and cysteine 255 together coordinate [4Fe-4S] cluster. GTP is bound at residue 257–259; the sequence is RMR. Residue cysteine 269 coordinates [4Fe-4S] cluster.

Belongs to the radical SAM superfamily. MoaA family. In terms of assembly, monomer and homodimer. It depends on [4Fe-4S] cluster as a cofactor.

It catalyses the reaction GTP + AH2 + S-adenosyl-L-methionine = (8S)-3',8-cyclo-7,8-dihydroguanosine 5'-triphosphate + 5'-deoxyadenosine + L-methionine + A + H(+). Its pathway is cofactor biosynthesis; molybdopterin biosynthesis. In terms of biological role, catalyzes the cyclization of GTP to (8S)-3',8-cyclo-7,8-dihydroguanosine 5'-triphosphate. The polypeptide is GTP 3',8-cyclase (Picosynechococcus sp. (strain ATCC 27264 / PCC 7002 / PR-6) (Agmenellum quadruplicatum)).